We begin with the raw amino-acid sequence, 289 residues long: MVAIDGLPPLRDVIAAHGLSARKALGQNFLLDLNLTAKIARLAGDLTSVDVLEVGPGPGGLTRGLLAEGARRVVAVEKDPRCLPVLAEIEAIYPGRLKVLNADALELDWAADLQAPRKIVANLPYNVGTELLVRWLTPASWPPPWESLTLMFQREVAERIVAQPGSKTYGRLAILSQWRADPRIVMGLPPEAFTPPPKVHSAVVHFTALPAPRFPADARVLTRVVAAAFGQRRKMLRAALKGLAPDIEDRLVAAGLKPTDRAEQVPLEGFCALARVMEDVITPSHGREA.

The S-adenosyl-L-methionine site is built by Asn28, Leu30, Gly55, Glu77, Asp103, and Asn122.

Belongs to the class I-like SAM-binding methyltransferase superfamily. rRNA adenine N(6)-methyltransferase family. RsmA subfamily.

It localises to the cytoplasm. The catalysed reaction is adenosine(1518)/adenosine(1519) in 16S rRNA + 4 S-adenosyl-L-methionine = N(6)-dimethyladenosine(1518)/N(6)-dimethyladenosine(1519) in 16S rRNA + 4 S-adenosyl-L-homocysteine + 4 H(+). Its function is as follows. Specifically dimethylates two adjacent adenosines (A1518 and A1519) in the loop of a conserved hairpin near the 3'-end of 16S rRNA in the 30S particle. May play a critical role in biogenesis of 30S subunits. This chain is Ribosomal RNA small subunit methyltransferase A, found in Jannaschia sp. (strain CCS1).